A 282-amino-acid polypeptide reads, in one-letter code: 4-diphosphocytidyl-2-C-methyl-D-erythritol kinase (282 aa).

The active site involves K12. 95 to 105 (PMGGGIGGGSS) provides a ligand contact to ATP. Residue D137 is part of the active site.

Belongs to the GHMP kinase family. IspE subfamily.

The enzyme catalyses 4-CDP-2-C-methyl-D-erythritol + ATP = 4-CDP-2-C-methyl-D-erythritol 2-phosphate + ADP + H(+). It functions in the pathway isoprenoid biosynthesis; isopentenyl diphosphate biosynthesis via DXP pathway; isopentenyl diphosphate from 1-deoxy-D-xylulose 5-phosphate: step 3/6. Catalyzes the phosphorylation of the position 2 hydroxy group of 4-diphosphocytidyl-2C-methyl-D-erythritol. This is 4-diphosphocytidyl-2-C-methyl-D-erythritol kinase from Pseudomonas aeruginosa (strain ATCC 15692 / DSM 22644 / CIP 104116 / JCM 14847 / LMG 12228 / 1C / PRS 101 / PAO1).